We begin with the raw amino-acid sequence, 495 residues long: Leucine aminopeptidase 2 (495 aa).

The signal sequence occupies residues 1–21 (MKSQLLSLAVAVTTISQGVVG). The PA domain maps to 124-218 (PPASKIMAEL…EDGKNLATLV (95 aa)). 2 N-linked (GlcNAc...) asparagine glycosylation sites follow: Asn-142 and Asn-235. Residues His-259 and Asp-271 each coordinate Zn(2+). N-linked (GlcNAc...) asparagine glycosylation occurs at Asn-272. The Proton acceptor role is filled by Glu-303. Residues Glu-304 and Asp-332 each contribute to the Zn(2+) site. The N-linked (GlcNAc...) asparagine glycan is linked to Asn-352. Zn(2+) is bound at residue His-430.

This sequence belongs to the peptidase M28 family. M28A subfamily. As to quaternary structure, monomer. The cofactor is Zn(2+).

It is found in the secreted. Activity is inhibited by EDTA, o-phenanthroline, bestatin and amastatin. Its function is as follows. Extracellular aminopeptidase that releases a wide variety of amino acids from natural peptides and contributes to pathogenicity. This chain is Leucine aminopeptidase 2 (LAP2), found in Trichophyton rubrum (Athlete's foot fungus).